The primary structure comprises 317 residues: 2,3,4,5-tetrahydropyridine-2,6-dicarboxylate N-succinyltransferase (317 aa).

Mg(2+) contacts are provided by Asp-166 and Glu-183. Glu-199 serves as the catalytic Acyl-anhydride intermediate. Succinyl-CoA is bound by residues Arg-201, Gly-216, Ser-219, Ala-242, 257–258 (EA), Gly-265, Lys-277, and 290–293 (RRNS).

The protein belongs to the type 2 tetrahydrodipicolinate N-succinyltransferase family. Homotrimer.

Its subcellular location is the cytoplasm. The catalysed reaction is (S)-2,3,4,5-tetrahydrodipicolinate + succinyl-CoA + H2O = (S)-2-succinylamino-6-oxoheptanedioate + CoA. It participates in amino-acid biosynthesis; L-lysine biosynthesis via DAP pathway; LL-2,6-diaminopimelate from (S)-tetrahydrodipicolinate (succinylase route): step 1/3. In terms of biological role, catalyzes the conversion of the cyclic tetrahydrodipicolinate (THDP) into the acyclic N-succinyl-L-2-amino-6-oxopimelate using succinyl-CoA. The protein is 2,3,4,5-tetrahydropyridine-2,6-dicarboxylate N-succinyltransferase (dapD) of Mycobacterium tuberculosis (strain CDC 1551 / Oshkosh).